The chain runs to 376 residues: MAGTDREKALDAALAQIERQFGKGAVMRMGERSKEPIEVIPTASTALDVALGVGGIPRGRVVEIYGPESSGKTTLTLHAVANAQKAGGSVAFIDAEHALDPEYAKKLGVDTDALILSQPDNGEQALEIVDMLVRSGALDLIVIDSVAALVPRAEIEGEMGDSHVGLQARLMSQALRKITSALNQSKTTAIFINQLREKIGVMFGSPETTTGGRALKFYASVRIDIRRIETLKDGTEAVGNRTRCKVVKNKVAPPFKQAEFDILYGQGISREGGLIDMGVEHGFIRKSGAWYTYEGDQLGQGKENARNFLKDNPDLANEVEKKIKEKLGVGVKPEDLTAEPGADAAGAAADAEAPAKSVPAPAAKSAKGSKAAAAKS.

66-73 (GPESSGKT) serves as a coordination point for ATP. A disordered region spans residues 329-376 (VGVKPEDLTAEPGADAAGAAADAEAPAKSVPAPAAKSAKGSKAAAAKS). The span at 338-376 (AEPGADAAGAAADAEAPAKSVPAPAAKSAKGSKAAAAKS) shows a compositional bias: low complexity.

Belongs to the RecA family.

Its subcellular location is the cytoplasm. In terms of biological role, can catalyze the hydrolysis of ATP in the presence of single-stranded DNA, the ATP-dependent uptake of single-stranded DNA by duplex DNA, and the ATP-dependent hybridization of homologous single-stranded DNAs. It interacts with LexA causing its activation and leading to its autocatalytic cleavage. The sequence is that of Protein RecA from Streptomyces rimosus.